A 215-amino-acid polypeptide reads, in one-letter code: Pyridoxine/pyridoxamine 5'-phosphate oxidase (215 aa).

Substrate contacts are provided by residues 9 to 12 (RRDY) and lysine 69. Residues 64-69 (RILLLK), 79-80 (FT), lysine 86, and glutamine 108 contribute to the FMN site. Residues tyrosine 126, arginine 130, and serine 134 each coordinate substrate. Residues 143 to 144 (QS) and tryptophan 188 contribute to the FMN site. 194-196 (RLH) lines the substrate pocket. Arginine 198 serves as a coordination point for FMN.

The protein belongs to the pyridoxamine 5'-phosphate oxidase family. In terms of assembly, homodimer. Requires FMN as cofactor.

It catalyses the reaction pyridoxamine 5'-phosphate + O2 + H2O = pyridoxal 5'-phosphate + H2O2 + NH4(+). The catalysed reaction is pyridoxine 5'-phosphate + O2 = pyridoxal 5'-phosphate + H2O2. It functions in the pathway cofactor metabolism; pyridoxal 5'-phosphate salvage; pyridoxal 5'-phosphate from pyridoxamine 5'-phosphate: step 1/1. The protein operates within cofactor metabolism; pyridoxal 5'-phosphate salvage; pyridoxal 5'-phosphate from pyridoxine 5'-phosphate: step 1/1. In terms of biological role, catalyzes the oxidation of either pyridoxine 5'-phosphate (PNP) or pyridoxamine 5'-phosphate (PMP) into pyridoxal 5'-phosphate (PLP). The chain is Pyridoxine/pyridoxamine 5'-phosphate oxidase from Pseudomonas fluorescens (strain SBW25).